A 374-amino-acid polypeptide reads, in one-letter code: Alcohol dehydrogenase class-3 (374 aa).

Alanine 2 carries the post-translational modification N-acetylalanine. Zn(2+) is bound by residues cysteine 45, histidine 67, cysteine 97, cysteine 100, cysteine 103, cysteine 111, and cysteine 174. Lysine 233 bears the N6-succinyllysine mark. Serine 247 bears the Phosphoserine mark. Lysine 315 is modified (N6-succinyllysine). 2 positions are modified to phosphoserine: serine 324 and serine 351.

It belongs to the zinc-containing alcohol dehydrogenase family. Class-III subfamily. Homodimer. It depends on Zn(2+) as a cofactor. Ubiquitous.

It localises to the cytoplasm. It carries out the reaction a primary alcohol + NAD(+) = an aldehyde + NADH + H(+). It catalyses the reaction a secondary alcohol + NAD(+) = a ketone + NADH + H(+). The enzyme catalyses S-(hydroxymethyl)glutathione + NADP(+) = S-formylglutathione + NADPH + H(+). The catalysed reaction is S-(hydroxymethyl)glutathione + NAD(+) = S-formylglutathione + NADH + H(+). It carries out the reaction 20-oxo-(5Z,8Z,11Z,14Z)-eicosatetraenoate + NAD(+) + H2O = (5Z,8Z,11Z,14Z)-eicosatetraenedioate + NADH + 2 H(+). It catalyses the reaction 20-hydroxy-(5Z,8Z,11Z,14Z)-eicosatetraenoate + NAD(+) = 20-oxo-(5Z,8Z,11Z,14Z)-eicosatetraenoate + NADH + H(+). The enzyme catalyses S-nitrosoglutathione + NADH + H(+) = S-(hydroxysulfenamide)glutathione + NAD(+). In terms of biological role, catalyzes the oxidation of long-chain primary alcohols and the oxidation of S-(hydroxymethyl) glutathione. Also oxidizes long chain omega-hydroxy fatty acids, such as 20-HETE, producing both the intermediate aldehyde, 20-oxoarachidonate and the end product, a dicarboxylic acid, (5Z,8Z,11Z,14Z)-eicosatetraenedioate. Class-III ADH is remarkably ineffective in oxidizing ethanol. Required for clearance of cellular formaldehyde, a cytotoxic and carcinogenic metabolite that induces DNA damage. Also acts as a S-nitroso-glutathione reductase by catalyzing the NADH-dependent reduction of S-nitrosoglutathione, thereby regulating protein S-nitrosylation. This is Alcohol dehydrogenase class-3 from Mus musculus (Mouse).